We begin with the raw amino-acid sequence, 339 residues long: Lipoate-protein ligase A (339 aa).

The region spanning 28–211 (NPDSHTLFLW…AFREYYRDTD (184 aa)) is the BPL/LPL catalytic domain. ATP-binding positions include R70, 75–78 (GAVF), and K129. K129 provides a ligand contact to (R)-lipoate.

This sequence belongs to the LplA family. Monomer.

Its subcellular location is the cytoplasm. The enzyme catalyses L-lysyl-[lipoyl-carrier protein] + (R)-lipoate + ATP = N(6)-[(R)-lipoyl]-L-lysyl-[lipoyl-carrier protein] + AMP + diphosphate + H(+). It participates in protein modification; protein lipoylation via exogenous pathway; protein N(6)-(lipoyl)lysine from lipoate: step 1/2. It functions in the pathway protein modification; protein lipoylation via exogenous pathway; protein N(6)-(lipoyl)lysine from lipoate: step 2/2. Functionally, catalyzes both the ATP-dependent activation of exogenously supplied lipoate to lipoyl-AMP and the transfer of the activated lipoyl onto the lipoyl domains of lipoate-dependent enzymes. The chain is Lipoate-protein ligase A from Psychrobacter cryohalolentis (strain ATCC BAA-1226 / DSM 17306 / VKM B-2378 / K5).